Consider the following 423-residue polypeptide: Gamma-glutamyl phosphate reductase (423 aa).

It belongs to the gamma-glutamyl phosphate reductase family.

Its subcellular location is the cytoplasm. It catalyses the reaction L-glutamate 5-semialdehyde + phosphate + NADP(+) = L-glutamyl 5-phosphate + NADPH + H(+). Its pathway is amino-acid biosynthesis; L-proline biosynthesis; L-glutamate 5-semialdehyde from L-glutamate: step 2/2. In terms of biological role, catalyzes the NADPH-dependent reduction of L-glutamate 5-phosphate into L-glutamate 5-semialdehyde and phosphate. The product spontaneously undergoes cyclization to form 1-pyrroline-5-carboxylate. The protein is Gamma-glutamyl phosphate reductase of Pseudomonas putida (strain ATCC 47054 / DSM 6125 / CFBP 8728 / NCIMB 11950 / KT2440).